The sequence spans 77 residues: MTKNTALTIFMVVLVIEMVMEETQGDTCHEYLYPEKCENNQCNSECATKFKEVGVFGFCVPPRSEPTEQFCICSYNC.

The first 25 residues, M1–G25, serve as a signal peptide directing secretion. 4 cysteine pairs are disulfide-bonded: C28-C77, C37-C59, C42-C71, and C46-C73.

The protein belongs to the DEFL family.

Its subcellular location is the secreted. This chain is Putative defensin-like protein 129 (LCR13), found in Arabidopsis thaliana (Mouse-ear cress).